The primary structure comprises 129 residues: Prefoldin subunit 4 (129 aa).

Met1 is modified (N-acetylmethionine).

This sequence belongs to the prefoldin subunit beta family. In terms of assembly, heterohexamer of two PFD-alpha type and four PFD-beta type subunits.

Functionally, binds specifically to cytosolic chaperonin (c-CPN) and transfers target proteins to it. Binds to nascent polypeptide chain and promotes folding in an environment in which there are many competing pathways for nonnative proteins. This chain is Prefoldin subunit 4 (GIM3), found in Saccharomyces cerevisiae (strain ATCC 204508 / S288c) (Baker's yeast).